The primary structure comprises 1357 residues: DNA-directed RNA polymerase subunit beta (1357 aa).

It belongs to the RNA polymerase beta chain family. In terms of assembly, the RNAP catalytic core consists of 2 alpha, 1 beta, 1 beta' and 1 omega subunit. When a sigma factor is associated with the core the holoenzyme is formed, which can initiate transcription.

It catalyses the reaction RNA(n) + a ribonucleoside 5'-triphosphate = RNA(n+1) + diphosphate. DNA-dependent RNA polymerase catalyzes the transcription of DNA into RNA using the four ribonucleoside triphosphates as substrates. The chain is DNA-directed RNA polymerase subunit beta from Ectopseudomonas mendocina (strain ymp) (Pseudomonas mendocina).